Consider the following 351-residue polypeptide: Small ribosomal subunit protein uS2 (351 aa).

Residues 302-351 (QNNYDPSKRGYNPKYVNHKSTFNKFNNKKPAEATSQAKTNEKIVIKAETN) form a disordered region. Positions 340-351 (TNEKIVIKAETN) are enriched in basic and acidic residues.

Belongs to the universal ribosomal protein uS2 family.

The sequence is that of Small ribosomal subunit protein uS2 from Ureaplasma urealyticum serovar 10 (strain ATCC 33699 / Western).